We begin with the raw amino-acid sequence, 367 residues long: Protein NDRG4-B (367 aa).

Residues 1–12 show a composition bias toward basic and acidic residues; that stretch reads MSELRFPEEKPL. 2 disordered regions span residues 1–21 and 333–367; these read MSELRFPEEKPLLRGQDTEME and LTSASSVDGARPRPCTQSESSDGIGQINHTMEVSC. Positions 347–367 are enriched in polar residues; that stretch reads CTQSESSDGIGQINHTMEVSC.

It belongs to the NDRG family.

It is found in the cytoplasm. It localises to the cytosol. Its function is as follows. Contributes to the maintenance of intracerebral BDNF levels within the normal range. May enhance growth factor-induced ERK1 and ERK2 phosphorylation. May attenuate growth factor-promoted ELK1 phosphorylation in a microtubule-dependent manner. This chain is Protein NDRG4-B (ndrg4-b), found in Xenopus laevis (African clawed frog).